The following is a 497-amino-acid chain: Glucose-6-phosphate isomerase (497 aa).

The active-site Proton donor is the E350. Catalysis depends on residues H381 and K485.

The protein belongs to the GPI family.

The protein localises to the cytoplasm. It catalyses the reaction alpha-D-glucose 6-phosphate = beta-D-fructose 6-phosphate. The protein operates within carbohydrate biosynthesis; gluconeogenesis. It participates in carbohydrate degradation; glycolysis; D-glyceraldehyde 3-phosphate and glycerone phosphate from D-glucose: step 2/4. Its function is as follows. Catalyzes the reversible isomerization of glucose-6-phosphate to fructose-6-phosphate. The sequence is that of Glucose-6-phosphate isomerase from Legionella pneumophila.